The following is a 278-amino-acid chain: Hydroxyethylthiazole kinase (278 aa).

Residue Met51 coordinates substrate. Residues Arg127 and Ser173 each coordinate ATP. Gly201 contacts substrate.

Belongs to the Thz kinase family. Mg(2+) is required as a cofactor.

It catalyses the reaction 5-(2-hydroxyethyl)-4-methylthiazole + ATP = 4-methyl-5-(2-phosphooxyethyl)-thiazole + ADP + H(+). The protein operates within cofactor biosynthesis; thiamine diphosphate biosynthesis; 4-methyl-5-(2-phosphoethyl)-thiazole from 5-(2-hydroxyethyl)-4-methylthiazole: step 1/1. Its function is as follows. Catalyzes the phosphorylation of the hydroxyl group of 4-methyl-5-beta-hydroxyethylthiazole (THZ). The chain is Hydroxyethylthiazole kinase from Leptothrix cholodnii (strain ATCC 51168 / LMG 8142 / SP-6) (Leptothrix discophora (strain SP-6)).